We begin with the raw amino-acid sequence, 356 residues long: 5-formaminoimidazole-4-carboxamide-1-(beta)-D-ribofuranosyl 5'-monophosphate synthetase (356 aa).

5-amino-1-(5-phospho-beta-D-ribosyl)imidazole-4-carboxamide is bound by residues histidine 27 and serine 94. In terms of domain architecture, ATP-grasp spans 116–333 (RCLAWESDRE…YSDLIEKGLS (218 aa)). ATP-binding positions include 145–196 (AELI…TRYY) and glutamate 226. Asparagine 255 is a 5-amino-1-(5-phospho-beta-D-ribosyl)imidazole-4-carboxamide binding site. 2 residues coordinate Mg(2+): glutamate 293 and glutamate 306.

Belongs to the phosphohexose mutase family. Mg(2+) is required as a cofactor. The cofactor is Mn(2+).

The enzyme catalyses 5-amino-1-(5-phospho-beta-D-ribosyl)imidazole-4-carboxamide + formate + ATP = 5-formamido-1-(5-phospho-D-ribosyl)imidazole-4-carboxamide + ADP + phosphate. It functions in the pathway purine metabolism; IMP biosynthesis via de novo pathway; 5-formamido-1-(5-phospho-D-ribosyl)imidazole-4-carboxamide from 5-amino-1-(5-phospho-D-ribosyl)imidazole-4-carboxamide (formate route): step 1/1. In terms of biological role, catalyzes the ATP- and formate-dependent formylation of 5-aminoimidazole-4-carboxamide-1-beta-d-ribofuranosyl 5'-monophosphate (AICAR) to 5-formaminoimidazole-4-carboxamide-1-beta-d-ribofuranosyl 5'-monophosphate (FAICAR) in the absence of folates. This chain is 5-formaminoimidazole-4-carboxamide-1-(beta)-D-ribofuranosyl 5'-monophosphate synthetase, found in Methanothrix thermoacetophila (strain DSM 6194 / JCM 14653 / NBRC 101360 / PT) (Methanosaeta thermophila).